Here is a 143-residue protein sequence, read N- to C-terminus: 3-dehydroquinate dehydratase (143 aa).

Tyr-22 serves as the catalytic Proton acceptor. Substrate-binding residues include Asn-73, His-79, and Asp-86. Catalysis depends on His-99, which acts as the Proton donor. Substrate is bound by residues 100–101 and Arg-110; that span reads IS.

This sequence belongs to the type-II 3-dehydroquinase family. Homododecamer.

It carries out the reaction 3-dehydroquinate = 3-dehydroshikimate + H2O. It functions in the pathway metabolic intermediate biosynthesis; chorismate biosynthesis; chorismate from D-erythrose 4-phosphate and phosphoenolpyruvate: step 3/7. In terms of biological role, catalyzes a trans-dehydration via an enolate intermediate. This chain is 3-dehydroquinate dehydratase, found in Mycobacterium avium (strain 104).